The following is a 312-amino-acid chain: Bark storage protein B (312 aa).

A signal peptide spans M1–I24. N70 carries an N-linked (GlcNAc...) asparagine glycan.

The protein to wound-inducible poplar endochitinases. In terms of assembly, monomer. In terms of tissue distribution, bark tissue.

Its function is as follows. May play a role in nitrogen storage. This is Bark storage protein B (BSP) from Populus deltoides (Eastern poplar).